The sequence spans 144 residues: Large ribosomal subunit protein uL13 (144 aa).

The protein belongs to the universal ribosomal protein uL13 family. As to quaternary structure, part of the 50S ribosomal subunit.

Its function is as follows. This protein is one of the early assembly proteins of the 50S ribosomal subunit, although it is not seen to bind rRNA by itself. It is important during the early stages of 50S assembly. The polypeptide is Large ribosomal subunit protein uL13 (Mesomycoplasma hyopneumoniae (strain 232) (Mycoplasma hyopneumoniae)).